A 1358-amino-acid polypeptide reads, in one-letter code: MKAELVPVCTAWILGLLLCLGPAAAKVCGPNMDIRNDVSELKQLRDCVVIEGYLQILLISNAKAEDFRNLRFPNLTVITDYLLLFRVSGLVSLSNLFPNLTVIRGRVLFYNYALVIFEMTDLKEIGLYNLRNITRGAVRIEKNSELCYVSTVDWSLVLDAVYNNYIVGNKPPKECVDLCPGAREKMQICEKSSINNEFADRCWSDEHCQKVCPSVCGKRACSDNNECCHPECLGSCTAPDNDTACVACHHYFYEGRCVPTCPSNTYKFEGWRCITREVCAKMHIWIHSTIPFIIHKGECVYECPSGYMLNKSQSMTCSPCEGPCPKICEEKMKTIDSVTSAQMLEGCTVLKGNLQLNIRKGQNIAAELENFLGLIETVTGYVKIRHSHALVSLSFLKSLRYILGEEQMPGNYSFYVFDNNNLQQLWDWSKHNLTIKEGKIRFAFNSKLCASEIYRMEEVTGTKGRQAEEDISLSTNGNMASCESHVLNFTSRSKIKNRIKLTWERYRPPDYRDLISFTVYYKEAPFRNVTEYDGQDACGSNSWNMVDVDLPASKESDPGILLQGLKPWTQYAIYVKAITLTMLENRHIHGAKSKIIYMRTDAAVPSIPQDMISASNSSSQLVVKWNPPSLPNGNLSYYIVRWQQQPQDRHLYQYNYCFKDKVPNRKYANGTIDTEGGTEPTKPEGSVGEKGHYCACPKTEAEEKAEKDEAEYRKVFENFLHNSIFVPRPNRRRRDVLAVGNSTVTSYEKNSTTEDFSNFSDSERDDIEYPFYETKVDYKWERTVISNLQPFTLYRIDIHSCNHEAEKLGCSASNFVFARTMPAAGADDIPGIVNTKEEDDGVIFLGWPEPLRPNGLILMYEIEYKHQGEVHRECVSRQDYRKNGGIKLVRLPPGNYSAQVQAISLYGNGSWTEMVSFCVKLKPDVRNNILQMVVAIPLALSFLLVGIISIVCFVFKKRNSNRLGNGVLYASVNPEYFSAAEMYVPDKWEVPREKITMNRELGQGSFGMVYEGIAKGVVKDEAETKVAIKTVNEAASMRERIEFLNEASVMKEFNCHHVVRLLGVVSQGQPTLVIMELMTRGDLKSYLRSLRPDTESNSGQPTPSLKKMIQMAGEIADGMSYLNANKFVHRDLAARNCMVTEDFTVKIGDFGMTRDIYETDYYRKGGKGLLPVRWMSPESLKDGVFTTNSDVWSFGVVLWEIATLAEQPYQGMSNEQVLRFVMEGGLLEKPDNCPDMLFELMRMCWQFNPKMRPSFLEIISSIKDELDPGFKEVSFFYSEENKPPDTEELDLEAENMESIPLDPSCALQNSEHHAGHKSENGPGVVVLRASFDERQPYAHMNGGRKNERALPLPQSSAC.

The signal sequence occupies residues 1-25 (MKAELVPVCTAWILGLLLCLGPAAA). A disulfide bridge links cysteine 28 with cysteine 47. Asparagine 74, asparagine 99, and asparagine 132 each carry an N-linked (GlcNAc...) asparagine glycan. 13 disulfides stabilise this stretch: cysteine 147–cysteine 175, cysteine 179–cysteine 202, cysteine 189–cysteine 208, cysteine 212–cysteine 221, cysteine 216–cysteine 227, cysteine 228–cysteine 236, cysteine 232–cysteine 245, cysteine 248–cysteine 257, cysteine 261–cysteine 273, cysteine 279–cysteine 299, cysteine 303–cysteine 317, cysteine 320–cysteine 324, and cysteine 328–cysteine 347. The N-linked (GlcNAc...) asparagine glycan is linked to asparagine 241. Asparagine 310 carries N-linked (GlcNAc...) asparagine glycosylation. N-linked (GlcNAc...) asparagine glycans are attached at residues asparagine 411 and asparagine 432. A disulfide bridge connects residues cysteine 449 and cysteine 482. 4 Fibronectin type-III domains span residues 483-603 (ESHV…TDAA), 604-702 (VPSI…TEAE), 727-818 (PRPN…FVFA), and 829-924 (IPGI…LKPD). N-linked (GlcNAc...) asparagine glycosylation is found at asparagine 488, asparagine 528, asparagine 616, asparagine 634, and asparagine 669. Residues 670–691 (GTIDTEGGTEPTKPEGSVGEKG) are disordered. Residues 735 to 934 (DVLAVGNSTV…VRNNILQMVV (200 aa)) lie on the Extracellular side of the membrane. N-linked (GlcNAc...) asparagine glycans are attached at residues asparagine 741, asparagine 750, asparagine 758, asparagine 895, and asparagine 908. The helical transmembrane segment at 935–955 (AIPLALSFLLVGIISIVCFVF) threads the bilayer. Residues 956-1358 (KKRNSNRLGN…ALPLPQSSAC (403 aa)) lie on the Cytoplasmic side of the membrane. A Phosphotyrosine; by autocatalysis modification is found at tyrosine 976. The Protein kinase domain maps to 995 to 1270 (ITMNRELGQG…SIKDELDPGF (276 aa)). ATP is bound by residues 1001–1009 (LGQGSFGMV) and lysine 1029. The active-site Proton acceptor is the aspartate 1131. A phosphotyrosine; by autocatalysis mark is found at tyrosine 1157, tyrosine 1161, and tyrosine 1162. The disordered stretch occupies residues 1336-1358 (PYAHMNGGRKNERALPLPQSSAC).

It belongs to the protein kinase superfamily. Tyr protein kinase family. Insulin receptor subfamily. Tetramer of 2 alpha and 2 beta chains linked by disulfide bonds. The alpha chains contribute to the formation of the ligand-binding domain, while the beta chain carries the kinase domain. The cofactor is Mn(2+). In terms of processing, the cytoplasmic domain of the beta subunit is autophosphorylated on Tyr residues in response to low concentrations of insulin-like growth factor (IGF1) and higher concentrations of insulin.

It is found in the cell membrane. It catalyses the reaction L-tyrosyl-[protein] + ATP = O-phospho-L-tyrosyl-[protein] + ADP + H(+). With respect to regulation, autophosphorylation activates the kinase activity. Its function is as follows. This receptor binds insulin-like growth factor 1 (IGF1) with a high affinity and IGF2 with a lower affinity. It has a tyrosine-protein kinase activity, which is necessary for the activation of the IGF1-stimulated downstream signaling cascade. Plays a role in oocyte maturation. Promotes head development by inhibiting Wnt signaling during embryogenesis. The polypeptide is Insulin-like growth factor 1 receptor (igf1r) (Xenopus laevis (African clawed frog)).